The sequence spans 224 residues: MTSWIELLDKQIEDQHMLKHEFYQRWSEGKLEKQQLQAYAKDYYLHIKAFPCYLSALHARCDDLQIRRQILENLMDEEAGNPNHIDLWRQFALSLGVSEEELANHEFSQAAQDMVATFRRLCDMPQLAVGLGALYTYEIQIPQVCVEKIRGLKEYFGVSARGYAYFTVHQEADIKHASEEKEMLQTLVGRENPDAVLQGSQEVLDTLWNFLSSFINSTEPCSCK.

Fe(2+) is bound by residues E77, H84, E138, H169, D173, and H176.

This sequence belongs to the CADD family. As to quaternary structure, homodimer. The cofactor is Fe(2+). Mn(2+) serves as cofactor.

In terms of biological role, involved in de novo para-aminobenzoate (PABA) biosynthesis. Acts as a self-sacrificing or 'suicide' enzyme that utilizes its own active site tyrosine residue(s) as the substrate for PABA synthesis. The side chain of the tyrosine residue is released from the protein backbone via cleavage of the C(alpha)-C(beta) bond, leaving a glycine in place of the original tyrosine residue. Reaction requires O(2) and a reduced dimetal cofactor. The chain is 4-aminobenzoate synthase from Chlamydia pneumoniae (Chlamydophila pneumoniae).